The chain runs to 500 residues: Probable cytosol aminopeptidase (500 aa).

Mn(2+) contacts are provided by lysine 264 and aspartate 269. Lysine 276 is an active-site residue. Residues aspartate 287, aspartate 346, and glutamate 348 each contribute to the Mn(2+) site. The active site involves arginine 350.

Belongs to the peptidase M17 family. The cofactor is Mn(2+).

The protein localises to the cytoplasm. It carries out the reaction Release of an N-terminal amino acid, Xaa-|-Yaa-, in which Xaa is preferably Leu, but may be other amino acids including Pro although not Arg or Lys, and Yaa may be Pro. Amino acid amides and methyl esters are also readily hydrolyzed, but rates on arylamides are exceedingly low.. It catalyses the reaction Release of an N-terminal amino acid, preferentially leucine, but not glutamic or aspartic acids.. Presumably involved in the processing and regular turnover of intracellular proteins. Catalyzes the removal of unsubstituted N-terminal amino acids from various peptides. The chain is Probable cytosol aminopeptidase from Nitrobacter winogradskyi (strain ATCC 25391 / DSM 10237 / CIP 104748 / NCIMB 11846 / Nb-255).